The chain runs to 156 residues: Large ribosomal subunit protein eL29 (156 aa).

Basic residues predominate over residues 1–26 (MAKSKNHTTHNQSRKWHRNGIKKPRS). Disordered stretches follow at residues 1 to 35 (MAKS…LKGV) and 116 to 156 (RRLC…VKAP). Lys5 carries the N6-methyllysine modification. Residue Ser31 is modified to Phosphoserine. Lys33 carries the N6-acetyllysine modification. A run of 2 repeats spans residues 129-136 (AEAKAPAK) and 137-144 (AQAKAPAQ). The interval 129–144 (AEAKAPAKAQAKAPAQ) is 2 X 8 AA tandem repeats of A-X-A-K-A-P-A-[KQ]. Low complexity predominate over residues 134–156 (PAKAQAKAPAQAPKGAQAPVKAP).

The protein belongs to the eukaryotic ribosomal protein eL29 family. As to quaternary structure, component of the large ribosomal subunit.

It is found in the cytoplasm. In terms of biological role, component of the large ribosomal subunit. The ribosome is a large ribonucleoprotein complex responsible for the synthesis of proteins in the cell. This chain is Large ribosomal subunit protein eL29 (Rpl29), found in Rattus norvegicus (Rat).